Consider the following 129-residue polypeptide: Large ribosomal subunit protein bL20 (129 aa).

This sequence belongs to the bacterial ribosomal protein bL20 family.

Binds directly to 23S ribosomal RNA and is necessary for the in vitro assembly process of the 50S ribosomal subunit. It is not involved in the protein synthesizing functions of that subunit. The protein is Large ribosomal subunit protein bL20 of Rhodococcus jostii (strain RHA1).